The primary structure comprises 135 residues: UPF0299 membrane protein ECA2828 (135 aa).

Helical transmembrane passes span 5–25, 30–50, 63–83, and 93–113; these read FIVC…LLAG, ALLP…FTLL, GCYL…VGVM, and FGPI…VVGF.

The protein belongs to the UPF0299 family.

Its subcellular location is the cell inner membrane. The protein is UPF0299 membrane protein ECA2828 of Pectobacterium atrosepticum (strain SCRI 1043 / ATCC BAA-672) (Erwinia carotovora subsp. atroseptica).